The chain runs to 130 residues: Ribosome-binding factor A (130 aa).

It belongs to the RbfA family. In terms of assembly, monomer. Binds 30S ribosomal subunits, but not 50S ribosomal subunits or 70S ribosomes.

The protein resides in the cytoplasm. In terms of biological role, one of several proteins that assist in the late maturation steps of the functional core of the 30S ribosomal subunit. Associates with free 30S ribosomal subunits (but not with 30S subunits that are part of 70S ribosomes or polysomes). Required for efficient processing of 16S rRNA. May interact with the 5'-terminal helix region of 16S rRNA. The protein is Ribosome-binding factor A of Flavobacterium psychrophilum (strain ATCC 49511 / DSM 21280 / CIP 103535 / JIP02/86).